We begin with the raw amino-acid sequence, 357 residues long: mRNA endoribonuclease toxin LS (357 aa).

As to quaternary structure, forms homodimer in solution. Forms a complex with cognate antitoxin RnlB and with enterobacteria phage T4 antitoxin Dmd.

It localises to the cytoplasm. Functionally, toxic component of a type II toxin-antitoxin (TA) system. A stable (half-life 27.6 minutes) endoribonuclease that in the absence of cognate antitoxin RnlB causes generalized RNA degradation. Degrades late enterobacteria phage T4 mRNAs, protecting the host against T4 reproduction. Activity is inhibited by cognate antitoxin RnlB and by enterobacteria phage T4 protein Dmd. Targets cyaA mRNA. This Escherichia coli (strain K12) protein is mRNA endoribonuclease toxin LS (rnlA).